The following is a 156-amino-acid chain: ATP synthase subunit b (156 aa).

Residues 7–29 (LIGQSVAFLIFVWFCMKFVWPPL) form a helical membrane-spanning segment.

Belongs to the ATPase B chain family. In terms of assembly, F-type ATPases have 2 components, F(1) - the catalytic core - and F(0) - the membrane proton channel. F(1) has five subunits: alpha(3), beta(3), gamma(1), delta(1), epsilon(1). F(0) has three main subunits: a(1), b(2) and c(10-14). The alpha and beta chains form an alternating ring which encloses part of the gamma chain. F(1) is attached to F(0) by a central stalk formed by the gamma and epsilon chains, while a peripheral stalk is formed by the delta and b chains.

The protein localises to the cell inner membrane. In terms of biological role, f(1)F(0) ATP synthase produces ATP from ADP in the presence of a proton or sodium gradient. F-type ATPases consist of two structural domains, F(1) containing the extramembraneous catalytic core and F(0) containing the membrane proton channel, linked together by a central stalk and a peripheral stalk. During catalysis, ATP synthesis in the catalytic domain of F(1) is coupled via a rotary mechanism of the central stalk subunits to proton translocation. Component of the F(0) channel, it forms part of the peripheral stalk, linking F(1) to F(0). This is ATP synthase subunit b from Shewanella denitrificans (strain OS217 / ATCC BAA-1090 / DSM 15013).